The primary structure comprises 197 residues: Adenine phosphoribosyltransferase (197 aa).

The protein belongs to the purine/pyrimidine phosphoribosyltransferase family. Homodimer.

It localises to the cytoplasm. It catalyses the reaction AMP + diphosphate = 5-phospho-alpha-D-ribose 1-diphosphate + adenine. It participates in purine metabolism; AMP biosynthesis via salvage pathway; AMP from adenine: step 1/1. Its function is as follows. Catalyzes a salvage reaction resulting in the formation of AMP, that is energically less costly than de novo synthesis. In Ralstonia nicotianae (strain ATCC BAA-1114 / GMI1000) (Ralstonia solanacearum), this protein is Adenine phosphoribosyltransferase.